The sequence spans 640 residues: Threonine--tRNA ligase (640 aa).

Residues 1-61 form the TGS domain; that stretch reads MLVVTLPDGS…DKDSQLAIIT (61 aa). The catalytic stretch occupies residues 242 to 533; sequence DHRRLGKQLD…LIENHTGNMP (292 aa). Zn(2+) contacts are provided by Cys333, His384, and His510.

The protein belongs to the class-II aminoacyl-tRNA synthetase family. Homodimer. The cofactor is Zn(2+).

It is found in the cytoplasm. It carries out the reaction tRNA(Thr) + L-threonine + ATP = L-threonyl-tRNA(Thr) + AMP + diphosphate + H(+). Its function is as follows. Catalyzes the attachment of threonine to tRNA(Thr) in a two-step reaction: L-threonine is first activated by ATP to form Thr-AMP and then transferred to the acceptor end of tRNA(Thr). Also edits incorrectly charged L-seryl-tRNA(Thr). This is Threonine--tRNA ligase from Polynucleobacter necessarius subsp. necessarius (strain STIR1).